The primary structure comprises 808 residues: TBC1 domain family member 10B (808 aa).

Disordered stretches follow at residues 1–38, 60–225, and 237–264; these read METGTAPLVAPPRRHGAPAAPSPPPRGSRAGPVVVVAP, PAWV…GTCE, and PEPAENSQDLGSTSSLGPGISGPRGQAP. At serine 22 the chain carries Phosphoserine. A compositionally biased stretch (low complexity) spans 27 to 38; that stretch reads GSRAGPVVVVAP. A compositionally biased stretch (pro residues) spans 100 to 112; it reads APKPQLPSGPESP. Serine 141 bears the Phosphoserine mark. Over residues 149 to 178 the composition is skewed to low complexity; the sequence is PTGTPTRTPSRTAPGALTAKPPLAPKPGTT. Phosphothreonine is present on threonine 152. Polar residues predominate over residues 179-189; the sequence is VASGVTARSAS. Arginine 186 carries the omega-N-methylarginine modification. A compositionally biased stretch (low complexity) spans 198–209; that stretch reads AAAATSASAGQA. Over residues 242-252 the composition is skewed to polar residues; it reads NSQDLGSTSSL. One can recognise a Rab-GAP TBC domain in the interval 360-548; that stretch reads GIPSSLRAKA…RVWDMFFCEG (189 aa). A disordered region spans residues 629-808; the sequence is QYRPSRRLHG…SAEARQDAYF (180 aa). The span at 655–676 shows a compositional bias: low complexity; that stretch reads PSSSLLSLPGLKSRGSRAAGGA. Phosphoserine is present on residues serine 658, serine 661, serine 678, and serine 687. The segment covering 684-696 has biased composition (low complexity); that stretch reads RRASAGPAPGPVV. The span at 707-718 shows a compositional bias: polar residues; that stretch reads SPTGNSTPLGSS. Residues 716–782 are a coiled coil; it reads GSSKETRKQE…KAQGRKLSLR (67 aa). Composition is skewed to basic and acidic residues over residues 719–774 and 793–808; these read KETR…EKKA and DGGDRPSAEARQDAYF.

The protein resides in the cytoplasm. It is found in the cell membrane. Functionally, acts as a GTPase-activating protein for RAB3A, RAB22A, RAB27A, and RAB35. Does not act on RAB2A and RAB6A. The chain is TBC1 domain family member 10B (TBC1D10B) from Homo sapiens (Human).